A 424-amino-acid polypeptide reads, in one-letter code: ATP-sensitive inward rectifier potassium channel 8 (424 aa).

Over 1-69 (MLARKSIIPE…IFTTLVDLKW (69 aa)) the chain is Cytoplasmic. S6 carries the phosphoserine modification. Residues 70–94 (RHTLVIFTMSFLCSWLLFAIMWWLV) form a helical membrane-spanning segment. The Extracellular portion of the chain corresponds to 95–126 (AFAHGDIYAYMEKGITEKSGLESAVCVTNVRS). Positions 127 to 138 (FTSAFLFSIEVQ) form an intramembrane region, helical; Pore-forming. Positions 139 to 145 (VTIGFGG) form an intramembrane region, pore-forming. Positions 140-145 (TIGFGG) match the Selectivity filter motif. The Extracellular segment spans residues 146-154 (RMMTEECPL). Residues 155-176 (AITVLILQNIVGLIINAVMLGC) traverse the membrane as a helical segment. The Cytoplasmic segment spans residues 177–424 (IFMKTAQAHR…PEGNQCPSES (248 aa)). The interval 374 to 424 (LSHQNSLRKRNSMRRNNSMRRSNSIRRNNSSLMVPKVQFMTPEGNQCPSES) is disordered. Residues 387-404 (RRNNSMRRSNSIRRNNSS) are compositionally biased toward low complexity.

This sequence belongs to the inward rectifier-type potassium channel (TC 1.A.2.1) family. KCNJ8 subfamily. As to quaternary structure, interacts with ABCC9. Widely expressed, including in pancreatic islets, pituitary, skeletal muscle and heart.

It localises to the membrane. It carries out the reaction K(+)(in) = K(+)(out). Inward rectifier potassium channels are characterized by a greater tendency to allow potassium to flow into the cell rather than out of it. Their voltage dependence is regulated by the concentration of extracellular potassium; as external potassium is raised, the voltage range of the channel opening shifts to more positive voltages. The inward rectification is mainly due to the blockage of outward current by internal magnesium. This channel is activated by internal ATP and can be blocked by external barium. Can form a sulfonyllurea-sensitive but ATP-insensitive potassium channel with ABCC9. The polypeptide is ATP-sensitive inward rectifier potassium channel 8 (Kcnj8) (Rattus norvegicus (Rat)).